Consider the following 85-residue polypeptide: Homeobox protein knotted-1-like 5 (85 aa).

An ELK domain is found at 1 to 21 (ELKEMLLKKYSGCLSRLRSEF). Positions 22–85 (LKKRKKGKLP…NQRKRHWKPS (64 aa)) form a DNA-binding region, homeobox; TALE-type.

The protein belongs to the TALE/KNOX homeobox family. Strongly expressed in ear inflorescence primordia and shoot meristem. Weakly expressed in embryos. Absent from leaves.

It is found in the nucleus. In terms of biological role, probably binds to the DNA sequence 5'-TGAC-3'. The sequence is that of Homeobox protein knotted-1-like 5 (KNOX5) from Zea mays (Maize).